Reading from the N-terminus, the 747-residue chain is Polyribonucleotide nucleotidyltransferase (747 aa).

2 residues coordinate Mg(2+): D487 and D493. Residues 554–613 (PSTTTIKIDKDKIRDIIGPGGKIIKEICETSGAKIDISDDGTVSVYAADRDKLKIASDKI) enclose the KH domain. One can recognise an S1 motif domain in the interval 623-691 (GEIFNGTVTK…NKGKAKLTIK (69 aa)). Residues 694 to 716 (DKDKSLNNPKPQNSINNAKENSE) are disordered. The segment covering 699 to 712 (LNNPKPQNSINNAK) has biased composition (polar residues).

The protein belongs to the polyribonucleotide nucleotidyltransferase family. Mg(2+) serves as cofactor.

The protein localises to the cytoplasm. It carries out the reaction RNA(n+1) + phosphate = RNA(n) + a ribonucleoside 5'-diphosphate. Involved in mRNA degradation. Catalyzes the phosphorolysis of single-stranded polyribonucleotides processively in the 3'- to 5'-direction. In Rickettsia canadensis (strain McKiel), this protein is Polyribonucleotide nucleotidyltransferase.